A 307-amino-acid chain; its full sequence is Nucleotide-binding protein Sca_0414 (307 aa).

An ATP-binding site is contributed by 19-26 (GMSGAGKS). A GTP-binding site is contributed by 70–73 (DLRG).

It belongs to the RapZ-like family.

Displays ATPase and GTPase activities. This chain is Nucleotide-binding protein Sca_0414, found in Staphylococcus carnosus (strain TM300).